The chain runs to 170 residues: Large ribosomal subunit protein uL10 (170 aa).

The protein belongs to the universal ribosomal protein uL10 family. Part of the ribosomal stalk of the 50S ribosomal subunit. The N-terminus interacts with L11 and the large rRNA to form the base of the stalk. The C-terminus forms an elongated spine to which L12 dimers bind in a sequential fashion forming a multimeric L10(L12)X complex.

Its function is as follows. Forms part of the ribosomal stalk, playing a central role in the interaction of the ribosome with GTP-bound translation factors. In Chlamydia caviae (strain ATCC VR-813 / DSM 19441 / 03DC25 / GPIC) (Chlamydophila caviae), this protein is Large ribosomal subunit protein uL10.